The following is a 618-amino-acid chain: Probable Xaa-Pro aminopeptidase P (618 aa).

Asp415, Asp426, Glu524, and Glu538 together coordinate Mn(2+).

The protein belongs to the peptidase M24B family. Mn(2+) serves as cofactor.

It catalyses the reaction Release of any N-terminal amino acid, including proline, that is linked to proline, even from a dipeptide or tripeptide.. Its function is as follows. Catalyzes the removal of a penultimate prolyl residue from the N-termini of peptides. The protein is Probable Xaa-Pro aminopeptidase P (AMPP) of Pyricularia oryzae (strain 70-15 / ATCC MYA-4617 / FGSC 8958) (Rice blast fungus).